Reading from the N-terminus, the 315-residue chain is 7,8-didemethyl-8-hydroxy-5-deazariboflavin synthase (315 aa).

Positions 6-237 (ITYSPAFTLV…EDITIQIPAN (232 aa)) constitute a Radical SAM core domain. [4Fe-4S] cluster contacts are provided by C20, C24, and C27.

The protein belongs to the radical SAM superfamily. CofG family. As to quaternary structure, consists of two subunits, CofG and CofH. [4Fe-4S] cluster is required as a cofactor.

The enzyme catalyses 5-amino-5-(4-hydroxybenzyl)-6-(D-ribitylimino)-5,6-dihydrouracil + S-adenosyl-L-methionine = 7,8-didemethyl-8-hydroxy-5-deazariboflavin + 5'-deoxyadenosine + L-methionine + NH4(+) + H(+). Its pathway is cofactor biosynthesis; coenzyme F0 biosynthesis. Functionally, catalyzes the radical-mediated synthesis of 7,8-didemethyl-8-hydroxy-5-deazariboflavin from 5-amino-5-(4-hydroxybenzyl)-6-(D-ribitylimino)-5,6-dihydrouracil. The sequence is that of 7,8-didemethyl-8-hydroxy-5-deazariboflavin synthase from Thermosynechococcus vestitus (strain NIES-2133 / IAM M-273 / BP-1).